A 345-amino-acid polypeptide reads, in one-letter code: tRNA N6-adenosine threonylcarbamoyltransferase (345 aa).

Fe cation-binding residues include His-111 and His-115. Substrate-binding positions include Leu-136–Gly-140, Asp-169, Gly-182, and Asn-279. Asp-307 lines the Fe cation pocket.

The protein belongs to the KAE1 / TsaD family. Fe(2+) is required as a cofactor.

Its subcellular location is the cytoplasm. The catalysed reaction is L-threonylcarbamoyladenylate + adenosine(37) in tRNA = N(6)-L-threonylcarbamoyladenosine(37) in tRNA + AMP + H(+). In terms of biological role, required for the formation of a threonylcarbamoyl group on adenosine at position 37 (t(6)A37) in tRNAs that read codons beginning with adenine. Is involved in the transfer of the threonylcarbamoyl moiety of threonylcarbamoyl-AMP (TC-AMP) to the N6 group of A37, together with TsaE and TsaB. TsaD likely plays a direct catalytic role in this reaction. The chain is tRNA N6-adenosine threonylcarbamoyltransferase from Actinobacillus succinogenes (strain ATCC 55618 / DSM 22257 / CCUG 43843 / 130Z).